Reading from the N-terminus, the 375-residue chain is MTLDTVTPRTNLLGLTREEMESFFVSLGEKKFRAAQVMKWIHHEGCADFASMTNLSKALRTRLEELAEIRGPRVVYEGTSQDGTRKWVLEVEDGSYVETVLIPAEGGKRRTLCVSSQVGCSLDCSFCSTGKQGFQRNLTSAEIIGQVWVASNSFGARRDTTNRPVTNVVMMGMGEPLLNYDNVVPAMKLMLDDNGYGLSKRRVTLSTSGVVPKLDQLGDELDVSLAVSLHAANDELRNELVPLNRKYNIATLLDACRRYLAKCDDTRMLTIEYTLIKDVNDQQHHAEELAALLADLPSKINLIPFNPFPHSGYEKPSRNQVMRFQQWLYDLGYTALVRTTRGDDIDAACGQLVGRVKDRTKRHERYIQSIQLDAD.

E98 acts as the Proton acceptor in catalysis. The Radical SAM core domain occupies 106–346; sequence GGKRRTLCVS…VRTTRGDDID (241 aa). A disulfide bond links C113 and C349. Residues C120, C124, and C127 each contribute to the [4Fe-4S] cluster site. Residues 174–175, S206, 228–230, and N306 contribute to the S-adenosyl-L-methionine site; these read GE and SLH. C349 (S-methylcysteine intermediate) is an active-site residue.

It belongs to the radical SAM superfamily. RlmN family. Requires [4Fe-4S] cluster as cofactor.

It localises to the cytoplasm. The catalysed reaction is adenosine(2503) in 23S rRNA + 2 reduced [2Fe-2S]-[ferredoxin] + 2 S-adenosyl-L-methionine = 2-methyladenosine(2503) in 23S rRNA + 5'-deoxyadenosine + L-methionine + 2 oxidized [2Fe-2S]-[ferredoxin] + S-adenosyl-L-homocysteine. It carries out the reaction adenosine(37) in tRNA + 2 reduced [2Fe-2S]-[ferredoxin] + 2 S-adenosyl-L-methionine = 2-methyladenosine(37) in tRNA + 5'-deoxyadenosine + L-methionine + 2 oxidized [2Fe-2S]-[ferredoxin] + S-adenosyl-L-homocysteine. Functionally, specifically methylates position 2 of adenine 2503 in 23S rRNA and position 2 of adenine 37 in tRNAs. m2A2503 modification seems to play a crucial role in the proofreading step occurring at the peptidyl transferase center and thus would serve to optimize ribosomal fidelity. The sequence is that of Dual-specificity RNA methyltransferase RlmN from Chromohalobacter salexigens (strain ATCC BAA-138 / DSM 3043 / CIP 106854 / NCIMB 13768 / 1H11).